The sequence spans 103 residues: UPF0145 protein BCE_5284 (103 aa).

Belongs to the UPF0145 family.

The sequence is that of UPF0145 protein BCE_5284 from Bacillus cereus (strain ATCC 10987 / NRS 248).